Reading from the N-terminus, the 43-residue chain is METANLVAIFVSCLLVSLTGYALYTSFGRPSEGLIDPFDNHED.

Residues 5-27 (NLVAIFVSCLLVSLTGYALYTSF) traverse the membrane as a helical segment.

This sequence belongs to the PsbN family.

The protein resides in the plastid. It is found in the chloroplast thylakoid membrane. May play a role in photosystem I and II biogenesis. This is Protein PsbN from Ephedra sinica (Chinese ephedra).